Reading from the N-terminus, the 305-residue chain is Mitochondrial distribution and morphology protein 12 (305 aa).

In terms of domain architecture, SMP-LTD spans Met-1 to Thr-236. Positions Leu-233 to Glu-305 are disordered. A compositionally biased stretch (acidic residues) spans Phe-235 to Arg-248. Residues Asn-258–Thr-269 show a composition bias toward basic and acidic residues. Over residues Glu-279 to Glu-305 the composition is skewed to polar residues.

The protein belongs to the MDM12 family. In terms of assembly, component of the ER-mitochondria encounter structure (ERMES) or MDM complex, composed of MMM1, MDM10, MDM12 and MDM34. An MMM1 homodimer associates with one molecule of MDM12 on each side in a pairwise head-to-tail manner, and the SMP-LTD domains of MMM1 and MDM12 generate a continuous hydrophobic tunnel for phospholipid trafficking.

It is found in the mitochondrion outer membrane. The protein resides in the endoplasmic reticulum membrane. Component of the ERMES/MDM complex, which serves as a molecular tether to connect the endoplasmic reticulum (ER) and mitochondria. Components of this complex are involved in the control of mitochondrial shape and protein biogenesis, and function in nonvesicular lipid trafficking between the ER and mitochondria. MDM12 is required for the interaction of the ER-resident membrane protein MMM1 and the outer mitochondrial membrane-resident beta-barrel protein MDM10. The MDM12-MMM1 subcomplex functions in the major beta-barrel assembly pathway that is responsible for biogenesis of all mitochondrial outer membrane beta-barrel proteins, and acts in a late step after the SAM complex. The MDM10-MDM12-MMM1 subcomplex further acts in the TOM40-specific pathway after the action of the MDM12-MMM1 complex. Essential for establishing and maintaining the structure of mitochondria and maintenance of mtDNA nucleoids. The polypeptide is Mitochondrial distribution and morphology protein 12 (Kluyveromyces lactis (strain ATCC 8585 / CBS 2359 / DSM 70799 / NBRC 1267 / NRRL Y-1140 / WM37) (Yeast)).